We begin with the raw amino-acid sequence, 541 residues long: Calcium/calmodulin-dependent protein kinase kinase (541 aa).

Residues 83 to 106 (AVQEDDEAGPHSSNNLAATMSPNL) are disordered. Over residues 93 to 106 (HSSNNLAATMSPNL) the composition is skewed to polar residues. In terms of domain architecture, Protein kinase spans 130–411 (YRLMEEIGQG…LHEVKVHTWV (282 aa)). Residues 136–144 (IGQGSYGIV) and Lys-159 each bind ATP. The RP domain stretch occupies residues 169 to 190 (NFACFRQPPPRRNKENAAPSVL). Asp-276 functions as the Proton acceptor in the catalytic mechanism. The tract at residues 437–442 (ENCVRV) is autoinhibitory domain. The tract at residues 440–465 (VRVIPRLDTLILVKAMGHRKRFGNPF) is calmodulin-binding. The disordered stretch occupies residues 462 to 512 (GNPFRNKLSAQSSIRDRRKSSSVKDPTYVPPPNSPPATSNNNLNSTKVDRP). The segment covering 497 to 507 (PATSNNNLNST) has biased composition (low complexity).

It belongs to the protein kinase superfamily. Ser/Thr protein kinase family. Requires Mg(2+) as cofactor. As to expression, expressed in head and tail neurons and vulval muscles.

It is found in the cytoplasm. The enzyme catalyses L-seryl-[protein] + ATP = O-phospho-L-seryl-[protein] + ADP + H(+). It carries out the reaction L-threonyl-[protein] + ATP = O-phospho-L-threonyl-[protein] + ADP + H(+). Its activity is regulated as follows. Activated by Ca(2+)/calmodulin. Binding of calmodulin may relieve intrasteric autoinhibition. Calcium/calmodulin-dependent protein kinase which phosphorylates cmk-1. Component of a calcium-triggered signaling cascade involved in CRE-mediated transcriptional activation, probably through cmk-1-mediated crh-1/CREB phosphorylation. Plays a role in salt-avoidance learning behavior via the phosphorylation of cmk-1. The chain is Calcium/calmodulin-dependent protein kinase kinase from Caenorhabditis elegans.